The chain runs to 129 residues: Small ribosomal subunit protein uS11 (129 aa).

The protein belongs to the universal ribosomal protein uS11 family. As to quaternary structure, part of the 30S ribosomal subunit. Interacts with proteins S7 and S18. Binds to IF-3.

Its function is as follows. Located on the platform of the 30S subunit, it bridges several disparate RNA helices of the 16S rRNA. Forms part of the Shine-Dalgarno cleft in the 70S ribosome. This Aliivibrio fischeri (strain ATCC 700601 / ES114) (Vibrio fischeri) protein is Small ribosomal subunit protein uS11.